A 96-amino-acid polypeptide reads, in one-letter code: Putative pterin-4-alpha-carbinolamine dehydratase (96 aa).

The protein belongs to the pterin-4-alpha-carbinolamine dehydratase family.

It catalyses the reaction (4aS,6R)-4a-hydroxy-L-erythro-5,6,7,8-tetrahydrobiopterin = (6R)-L-erythro-6,7-dihydrobiopterin + H2O. In Synechocystis sp. (strain ATCC 27184 / PCC 6803 / Kazusa), this protein is Putative pterin-4-alpha-carbinolamine dehydratase.